The sequence spans 257 residues: MAIHPTAIVEAGAQVDPSCDIGPYAVIGPLVRMGPGNSVGAHAVVTGRTTLGASNRIFPHAVIGGIPQDLKYRGEDTALVIGDRNTFREFATVNLGTAGGGGVTRIGSGGLFMASSHIGHDCQVGDGAIIANSVAIAGHVLIEDHVHFGGLSASHQFCRVGRLAFVGGMTGVAMDVAPYCTVAGARGELAGLNTIGMQRAGMTEEQVGRVKQAYKIVFRSSLGLAEAIAQLEAELAGHPETDHFIAFLKGSQRGITR.

It belongs to the transferase hexapeptide repeat family. LpxA subfamily. Homotrimer.

The protein localises to the cytoplasm. It catalyses the reaction a (3R)-hydroxyacyl-[ACP] + UDP-N-acetyl-alpha-D-glucosamine = a UDP-3-O-[(3R)-3-hydroxyacyl]-N-acetyl-alpha-D-glucosamine + holo-[ACP]. The protein operates within glycolipid biosynthesis; lipid IV(A) biosynthesis; lipid IV(A) from (3R)-3-hydroxytetradecanoyl-[acyl-carrier-protein] and UDP-N-acetyl-alpha-D-glucosamine: step 1/6. Involved in the biosynthesis of lipid A, a phosphorylated glycolipid that anchors the lipopolysaccharide to the outer membrane of the cell. The protein is Acyl-[acyl-carrier-protein]--UDP-N-acetylglucosamine O-acyltransferase of Anaeromyxobacter dehalogenans (strain 2CP-1 / ATCC BAA-258).